A 662-amino-acid chain; its full sequence is Interleukin-12 receptor subunit beta-1 (662 aa).

An N-terminal signal peptide occupies residues 1–23 (MEPLVTWVVPLLFLFLLSRQGAA). Over 24-545 (CRTSECCFQD…RFSIEVQVSD (522 aa)) the chain is Extracellular. 5 consecutive Fibronectin type-III domains span residues 46–136 (GPRD…LYNS), 142–234 (PLGD…VPPE), 237–337 (PQPQ…IPAD), 338–444 (THTE…GNAS), and 448–542 (TPHH…IEVQ). C52 and C62 are joined by a disulfide. N121 carries an N-linked (GlcNAc...) asparagine glycan. Residues 222–226 (WSKWS) carry the WSXWS motif motif. N-linked (GlcNAc...) asparagine glycans are attached at residues N329, N346, N352, N442, and N456. Residues 546 to 570 (WLIFFASLGSFLSILLVGVLGYLGL) form a helical membrane-spanning segment. Over 571-662 (NRAARHLCPP…EDGDRCKAKM (92 aa)) the chain is Cytoplasmic. The Box 1 motif signature appears at 577–585 (LCPPLPTPC). Basic and acidic residues predominate over residues 626–637 (GERTEPLEKTEL). The tract at residues 626-648 (GERTEPLEKTELPEGAPELALDT) is disordered.

The protein belongs to the type I cytokine receptor family. Type 2 subfamily. Dimer or oligomer; disulfide-linked. Interacts with IL12RB2 to form the high affinity IL12 receptor. Heterodimer with IL23R; in presence of IL23. The heterodimer forms the IL23 receptor.

It is found in the membrane. In terms of biological role, functions as an interleukin receptor which binds interleukin-12 with low affinity and is involved in IL12 transduction. Associated with IL12RB2 it forms a functional, high affinity receptor for IL12. Also associates with IL23R to form the interleukin-23 receptor which functions in IL23 signal transduction probably through activation of the Jak-Stat signaling cascade. This is Interleukin-12 receptor subunit beta-1 (IL12RB1) from Homo sapiens (Human).